We begin with the raw amino-acid sequence, 369 residues long: DNA replication and repair protein RecF (369 aa).

30–37 (GDNGSGKT) is an ATP binding site.

The protein belongs to the RecF family.

The protein localises to the cytoplasm. The RecF protein is involved in DNA metabolism; it is required for DNA replication and normal SOS inducibility. RecF binds preferentially to single-stranded, linear DNA. It also seems to bind ATP. The polypeptide is DNA replication and repair protein RecF (Pseudomonas aeruginosa (strain UCBPP-PA14)).